The primary structure comprises 272 residues: Shikimate dehydrogenase (NADP(+)) (272 aa).

Residues 14 to 16 (SKS) and T61 each bind shikimate. K65 acts as the Proton acceptor in catalysis. E77 contacts NADP(+). Shikimate is bound by residues N86 and D102. Residues 126-130 (GAGGA), 149-154 (NRTVSR), and M213 contribute to the NADP(+) site. Y215 is a binding site for shikimate. Position 237 (G237) interacts with NADP(+).

The protein belongs to the shikimate dehydrogenase family. As to quaternary structure, homodimer.

The catalysed reaction is shikimate + NADP(+) = 3-dehydroshikimate + NADPH + H(+). It functions in the pathway metabolic intermediate biosynthesis; chorismate biosynthesis; chorismate from D-erythrose 4-phosphate and phosphoenolpyruvate: step 4/7. Functionally, involved in the biosynthesis of the chorismate, which leads to the biosynthesis of aromatic amino acids. Catalyzes the reversible NADPH linked reduction of 3-dehydroshikimate (DHSA) to yield shikimate (SA). The chain is Shikimate dehydrogenase (NADP(+)) from Shigella flexneri serotype 5b (strain 8401).